Reading from the N-terminus, the 479-residue chain is MILVTLFCICALVTSLQADARLSKRYVIGGCPSHCDKSMCPTMPKDCSTGQVMDHCNCCLVCASGEGEACGGVGKLGDPVCGESLECSVTGGVSYSATVRRRGKQGVCVCKSSDPVCGSDGVSYRDICELKRVSNRAQSLQQPPVLFIQRGACGTSLHDNPNSLRYKYNFIADVVEKIAPAVVHIELYRKMVYSKREMAVASGSGFVVSDDGLIVTNAHVVANKNRVKVELKNGASYDAKIKDVDEKADIALIKIDLPNKLPVLLLGRSADLRPGEFVVAIGSPFSLQNTVTTGIVSTTQRGGKELGLRNSDMDYIQTDAIINYGNSGGPLVNLDGEVIGINTLKVTAGISFAIPSDKIRQFLAESYDRLARGRGTTKKRYIGVRMMTLTPSLSKELKGRLRDFPDITSGAYVIEVISKTPAAAGGLKEHDVIISINGQRISTATDVSAIIKKESSLRVVVRRGNEDIILTIIPMEIDP.

Positions 1 to 18 (MILVTLFCICALVTSLQA) are cleaved as a signal peptide. Residues 27 to 111 (VIGGCPSHCD…RGKQGVCVCK (85 aa)) enclose the IGFBP N-terminal domain. Cystine bridges form between Cys-31–Cys-56, Cys-35–Cys-58, Cys-40–Cys-59, Cys-47–Cys-62, Cys-70–Cys-87, and Cys-81–Cys-108. The region spanning 96–155 (SATVRRRGKQGVCVCKSSDPVCGSDGVSYRDICELKRVSNRAQSLQQPPVLFIQRGACGT) is the Kazal-like domain. The segment at 203–363 (GSGFVVSDDG…IPSDKIRQFL (161 aa)) is serine protease. Active-site charge relay system residues include His-219, Asp-249, and Ser-327. One can recognise a PDZ domain in the interval 364 to 466 (AESYDRLARG…LRVVVRRGNE (103 aa)).

The protein belongs to the peptidase S1C family. As to quaternary structure, forms homotrimers. In the presence of substrate, may form higher-order multimers in a PDZ-independent manner.

The protein resides in the secreted. It is found in the cytoplasm. Its subcellular location is the cytosol. Functionally, serine protease with a variety of targets, including extracellular matrix proteins and proteoglycans. Through cleavage of proteoglycans, may release soluble FGF-glycosaminoglycan complexes that promote the range and intensity of FGF signals in the extracellular space. Regulates the availability of insulin-like growth factors (IGFs) by cleaving IGF-binding proteins. Inhibits signaling mediated by TGF-beta family members. Consequently, may regulate many physiological processes. Intracellularly, degrades TSC2, leading to the activation of TSC2 downstream targets. The chain is Serine protease HTRA1A (htra1a) from Danio rerio (Zebrafish).